The chain runs to 635 residues: Ankyrin repeat and SOCS box protein 2 (635 aa).

The required for FLNA degradation stretch occupies residues 8 to 16; that stretch reads RGSQCTIGQ. A UIM domain is found at 26-45; the sequence is SEDELVQMAIEQSLADKTRG. ANK repeat units follow at residues 104 to 133, 137 to 167, 171 to 200, 204 to 233, 237 to 266, 270 to 299, 303 to 332, 336 to 365, 368 to 397, 410 to 439, 440 to 469, and 476 to 504; these read APAD…NLAE, EGWL…TIDQ, QEET…EPDI, SRET…DTNH, RGWT…KVES, YGIT…DINT, DNAS…DANK, DGLL…RTRI, SGVS…DVNT, RRSS…DPNR, DVIS…NIDA, and TAFP…DGEP. At serine 371 the chain carries Phosphoserine; by MAPK. The 50-residue stretch at 586-635 folds into the SOCS box domain; that stretch reads IKEKAEPPRPLAHLCRLRVRKAIGKYRIKLLDTLPLPGRLIRYLKYENTQ.

Belongs to the ankyrin SOCS box (ASB) family. Component of a probable ECS E3 ubiquitin-protein ligase complex which contains CUL5, either RBX1 or RNF7/RBX2, Elongin BC complex (ELOB and ELOC) and ASB2. Interacts with SKP2. Through its interaction with SKP2, likely to bridge the formation of dimeric E3-ubiquitin-protein ligase complexes composed of an ECS complex and an SCF(SKP2) complex. Interacts with JAK2; the interaction targets JAK2 for Notch-mediated proteasomal degradation. Interacts with TCF3/E2A; the interaction is mediated by SKP2 and targets TCF3 for Notch-mediated proteasomal degradation. As to quaternary structure, interacts with DES. Post-translationally, monoubiquitinated. In terms of processing, not monoubiquitinated. Phosphorylation at Ser-371 is required for association with FLNA and subsequent FLNA degradation. In terms of tissue distribution, expressed in muscle cells. As to expression, expressed in hematopoietic cells.

Its subcellular location is the cytoplasm. The protein localises to the cytoskeleton. It localises to the stress fiber. The protein resides in the myofibril. It is found in the sarcomere. Its subcellular location is the z line. It functions in the pathway protein modification; protein ubiquitination. Functionally, substrate-recognition component of a SCF-like ECS (Elongin-Cullin-SOCS-box protein) E3 ubiquitin-protein ligase complex which mediates the ubiquitination and subsequent proteasomal degradation of target proteins. Mediates Notch-induced ubiquitination and degradation of substrates including TCF3/E2A and JAK2. Required during embryonic heart development for complete heart looping. Required for cardiomyocyte differentiation. Specifically promotes the ubiquitination of SMAD9 and targets it for proteasomal degradation, leading to avoid excessive accumulation of SMAD9. Plays a role in the regulation of NK-cell migration by modulating protein levels of filamin A/FLNA via regulation of its ubiquitination and proteasome degradation. In terms of biological role, involved in myogenic differentiation and targets filamin FLNB for proteasomal degradation but not filamin FLNA. Also targets DES for proteasomal degradation. Acts as a negative regulator of skeletal muscle mass. Its function is as follows. Targets filamins FLNA and FLNB for proteasomal degradation. This leads to enhanced adhesion of hematopoietic cells to fibronectin. Required for FLNA degradation in immature cardiomyocytes which is necessary for actin cytoskeleton remodeling, leading to proper organization of myofibrils and function of mature cardiomyocytes. Required for degradation of FLNA and FLNB in immature dendritic cells (DC) which enhances immature DC migration by promoting DC podosome formation and DC-mediated degradation of the extracellular matrix. Does not promote proteasomal degradation of tyrosine-protein kinases JAK1 or JAK2 in hematopoietic cells. The polypeptide is Ankyrin repeat and SOCS box protein 2 (ASB2) (Homo sapiens (Human)).